The following is a 248-amino-acid chain: Probable N-acetylglucosaminyl-phosphatidylinositol de-N-acetylase (248 aa).

Over 1-7 (MIWFWST) the chain is Lumenal. A helical transmembrane segment spans residues 8–24 (LLVTAIAVLSTANESSS). At 25–248 (GQEKLAVESI…MSNNVLKRAT (224 aa)) the chain is on the cytoplasmic side.

Belongs to the PIGL family.

It localises to the endoplasmic reticulum membrane. It carries out the reaction a 6-(N-acetyl-alpha-D-glucosaminyl)-1-(1,2-diacyl-sn-glycero-3-phospho)-1D-myo-inositol + H2O = a 6-(alpha-D-glucosaminyl)-1-(1,2-diacyl-sn-glycero-3-phospho)-1D-myo-inositol + acetate. Its pathway is glycolipid biosynthesis; glycosylphosphatidylinositol-anchor biosynthesis. Its function is as follows. Involved in the second step of GPI biosynthesis. De-N-acetylation of N-acetylglucosaminyl-phosphatidylinositol. The protein is Probable N-acetylglucosaminyl-phosphatidylinositol de-N-acetylase (gpi12) of Schizosaccharomyces pombe (strain 972 / ATCC 24843) (Fission yeast).